Here is a 315-residue protein sequence, read N- to C-terminus: Methionyl-tRNA formyltransferase (315 aa).

Residue 113–116 (SILP) coordinates (6S)-5,6,7,8-tetrahydrofolate.

It belongs to the Fmt family.

The catalysed reaction is L-methionyl-tRNA(fMet) + (6R)-10-formyltetrahydrofolate = N-formyl-L-methionyl-tRNA(fMet) + (6S)-5,6,7,8-tetrahydrofolate + H(+). Its function is as follows. Attaches a formyl group to the free amino group of methionyl-tRNA(fMet). The formyl group appears to play a dual role in the initiator identity of N-formylmethionyl-tRNA by promoting its recognition by IF2 and preventing the misappropriation of this tRNA by the elongation apparatus. The sequence is that of Methionyl-tRNA formyltransferase from Vibrio cholerae serotype O1 (strain ATCC 39541 / Classical Ogawa 395 / O395).